Reading from the N-terminus, the 527-residue chain is Cytochrome P450 714B3 (527 aa).

Residues 1-14 lie on the Lumenal side of the membrane; sequence MEVAMAMAVKVLLS. Residues 15-35 traverse the membrane as a helical; Signal-anchor for type III membrane protein segment; it reads LCCVGACGLAVYLYHILWLVP. The Cytoplasmic portion of the chain corresponds to 36–527; the sequence is QKVLAKFEDQ…SVCTKRGTAI (492 aa). C464 contributes to the heme binding site.

It belongs to the cytochrome P450 family. The cofactor is heme.

It is found in the membrane. Its function is as follows. May be involved in gibberellin metabolism. This Zea mays (Maize) protein is Cytochrome P450 714B3 (CYP714B3).